The sequence spans 197 residues: Imidazoleglycerol-phosphate dehydratase (197 aa).

It belongs to the imidazoleglycerol-phosphate dehydratase family.

The protein localises to the cytoplasm. It carries out the reaction D-erythro-1-(imidazol-4-yl)glycerol 3-phosphate = 3-(imidazol-4-yl)-2-oxopropyl phosphate + H2O. It participates in amino-acid biosynthesis; L-histidine biosynthesis; L-histidine from 5-phospho-alpha-D-ribose 1-diphosphate: step 6/9. This chain is Imidazoleglycerol-phosphate dehydratase, found in Cellvibrio japonicus (strain Ueda107) (Pseudomonas fluorescens subsp. cellulosa).